The primary structure comprises 133 residues: UPF0225 protein BP2036 (133 aa).

This sequence belongs to the UPF0225 family.

This chain is UPF0225 protein BP2036, found in Bordetella pertussis (strain Tohama I / ATCC BAA-589 / NCTC 13251).